The primary structure comprises 545 residues: Cytochrome P450 10 (545 aa).

A heme-binding site is contributed by cysteine 493.

This sequence belongs to the cytochrome P450 family. Requires heme as cofactor. In terms of tissue distribution, abundantly expressed in the female gonadotropic hormone producing dorsal bodies.

Functionally, may be involved in the synthesis of the female gonadotropic hormone produced by the dorsal bodies. The sequence is that of Cytochrome P450 10 (CYP10) from Lymnaea stagnalis (Great pond snail).